Here is a 168-residue protein sequence, read N- to C-terminus: Crossover junction endodeoxyribonuclease RuvC (168 aa).

Catalysis depends on residues aspartate 7, glutamate 66, and aspartate 138. Mg(2+) contacts are provided by aspartate 7, glutamate 66, and aspartate 138.

Belongs to the RuvC family. In terms of assembly, homodimer which binds Holliday junction (HJ) DNA. The HJ becomes 2-fold symmetrical on binding to RuvC with unstacked arms; it has a different conformation from HJ DNA in complex with RuvA. In the full resolvosome a probable DNA-RuvA(4)-RuvB(12)-RuvC(2) complex forms which resolves the HJ. Mg(2+) is required as a cofactor.

The protein localises to the cytoplasm. The catalysed reaction is Endonucleolytic cleavage at a junction such as a reciprocal single-stranded crossover between two homologous DNA duplexes (Holliday junction).. In terms of biological role, the RuvA-RuvB-RuvC complex processes Holliday junction (HJ) DNA during genetic recombination and DNA repair. Endonuclease that resolves HJ intermediates. Cleaves cruciform DNA by making single-stranded nicks across the HJ at symmetrical positions within the homologous arms, yielding a 5'-phosphate and a 3'-hydroxyl group; requires a central core of homology in the junction. The consensus cleavage sequence is 5'-(A/T)TT(C/G)-3'. Cleavage occurs on the 3'-side of the TT dinucleotide at the point of strand exchange. HJ branch migration catalyzed by RuvA-RuvB allows RuvC to scan DNA until it finds its consensus sequence, where it cleaves and resolves the cruciform DNA. The protein is Crossover junction endodeoxyribonuclease RuvC of Cereibacter sphaeroides (strain ATCC 17023 / DSM 158 / JCM 6121 / CCUG 31486 / LMG 2827 / NBRC 12203 / NCIMB 8253 / ATH 2.4.1.) (Rhodobacter sphaeroides).